The following is a 364-amino-acid chain: Protein RecA (364 aa).

Position 77 to 84 (77 to 84) interacts with ATP; it reads GPESSGKT. A disordered region spans residues 343–364; it reads DRFLQNGGPDPDDGDGDATAEM. Positions 352 to 364 are enriched in acidic residues; sequence DPDDGDGDATAEM.

It belongs to the RecA family.

It is found in the cytoplasm. Its function is as follows. Can catalyze the hydrolysis of ATP in the presence of single-stranded DNA, the ATP-dependent uptake of single-stranded DNA by duplex DNA, and the ATP-dependent hybridization of homologous single-stranded DNAs. It interacts with LexA causing its activation and leading to its autocatalytic cleavage. The sequence is that of Protein RecA from Rhizobium johnstonii (strain DSM 114642 / LMG 32736 / 3841) (Rhizobium leguminosarum bv. viciae).